The sequence spans 258 residues: MAYVSMKQMLETGVHFGHQTRRWNPKMRPYIFGARNGIHIIDLQQTVKLFRIAHDKVVDIVAKGGKVLFIGTKRQAQEAVAAEAGRAGQFFVTNRWMGGTLTNFVTIQKSVDRLKKLESMFADGSINRYQKKEILLLERELAKLEETLGGIKNMDRLPQIAFIIDPHREDIAVKECRKLGIPIIAVTDTNCDPDVIDYIIPGNDDAIRAIKLFVAAFAEACMEGEAMGKDHKGETANAEEAMQKAAAVEAAAEAAPAQ.

A disordered region spans residues 234–258 (ETANAEEAMQKAAAVEAAAEAAPAQ). Positions 236 to 258 (ANAEEAMQKAAAVEAAAEAAPAQ) are enriched in low complexity.

This sequence belongs to the universal ribosomal protein uS2 family.

In Desulfovibrio desulfuricans (strain ATCC 27774 / DSM 6949 / MB), this protein is Small ribosomal subunit protein uS2.